The sequence spans 202 residues: ATP synthase subunit b 1 (202 aa).

A helical transmembrane segment spans residues 17–37 (IAAVLCFSVLVPLVAMAAEGG).

This sequence belongs to the ATPase B chain family. As to quaternary structure, F-type ATPases have 2 components, F(1) - the catalytic core - and F(0) - the membrane proton channel. F(1) has five subunits: alpha(3), beta(3), gamma(1), delta(1), epsilon(1). F(0) has three main subunits: a(1), b(2) and c(10-14). The alpha and beta chains form an alternating ring which encloses part of the gamma chain. F(1) is attached to F(0) by a central stalk formed by the gamma and epsilon chains, while a peripheral stalk is formed by the delta and b chains.

It localises to the cell inner membrane. F(1)F(0) ATP synthase produces ATP from ADP in the presence of a proton or sodium gradient. F-type ATPases consist of two structural domains, F(1) containing the extramembraneous catalytic core and F(0) containing the membrane proton channel, linked together by a central stalk and a peripheral stalk. During catalysis, ATP synthesis in the catalytic domain of F(1) is coupled via a rotary mechanism of the central stalk subunits to proton translocation. Its function is as follows. Component of the F(0) channel, it forms part of the peripheral stalk, linking F(1) to F(0). The polypeptide is ATP synthase subunit b 1 (Syntrophus aciditrophicus (strain SB)).